The following is a 213-amino-acid chain: Ripening-related protein 3 (213 aa).

An N-terminal signal peptide occupies residues 1-32 (MAGAMTMSRRRLSHALLLVLAILPNLAALAVA).

Belongs to the kiwellin family.

It localises to the secreted. The sequence is that of Ripening-related protein 3 from Oryza sativa subsp. japonica (Rice).